The primary structure comprises 216 residues: Small ribosomal subunit protein uS3c (216 aa).

One can recognise a KH type-2 domain in the interval 43–118 (IKNYIQKNRR…RLKIAITRVE (76 aa)).

Belongs to the universal ribosomal protein uS3 family. As to quaternary structure, part of the 30S ribosomal subunit.

Its subcellular location is the plastid. The protein resides in the chloroplast. This is Small ribosomal subunit protein uS3c (rps3) from Dioscorea elephantipes (Elephant's foot yam).